The sequence spans 475 residues: Pregnancy-specific glycoprotein 22 (475 aa).

The first 35 residues, 1–35 (MEVSSELLSNGWTSWQRVLLTASLLTCWLLPITAG), serve as a signal peptide directing secretion. Ig-like V-type domains are found at residues 44–140 (KLVE…FLQV), 162–260 (PASV…YLQV), and 280–380 (PVPP…QVNV). N-linked (GlcNAc...) asparagine glycans are attached at residues Asn-103, Asn-110, and Asn-231. Residues 387-471 (PVMRVTDSTV…SKTSLPVRLT (85 aa)) enclose the Ig-like C2-type domain. Residues Cys-406 and Cys-454 are joined by a disulfide bond.

Belongs to the immunoglobulin superfamily. CEA family.

The protein resides in the secreted. Functionally, may have an angiogenic function during early placental development. Binds to cell-surface heparan sulfate proteoglycans (HSPGs), and stimulates secretion of the proangiogenic factors VEGFA and TGFB from uterine dendritic cells and natural killer cells. Also induces endothelial tube formation in vitro. In Mus musculus (Mouse), this protein is Pregnancy-specific glycoprotein 22.